The following is a 158-amino-acid chain: Glycosyl-phosphatidylinositol-anchored molecule-like protein (158 aa).

An N-terminal signal peptide occupies residues 1 to 17 (MLLFALLLAMELPLVAA). Positions 29–134 (LRCHDCAVIN…DEVTEEELPE (106 aa)) constitute a UPAR/Ly6 domain. Intrachain disulfides connect Cys31/Cys55, Cys34/Cys42, Cys48/Cys73, Cys77/Cys104, and Cys105/Cys110.

Its subcellular location is the cell membrane. May play a role in the apoptotic pathway or cell-cycle regulation induced by p53/TP53 after DNA damage. The protein is Glycosyl-phosphatidylinositol-anchored molecule-like protein (GML) of Homo sapiens (Human).